The primary structure comprises 884 residues: Endoribonuclease ysh1 (884 aa).

The Zn(2+) site is built by histidine 83, histidine 85, aspartate 87, histidine 88, histidine 174, and aspartate 195. Residue histidine 446 is the Proton donor of the active site. Histidine 468 is a binding site for Zn(2+). Disordered regions lie at residues 595–626 (EIGT…EEIP), 678–705 (PASV…LKFL), and 734–780 (PIER…QDPD). Basic and acidic residues predominate over residues 605-619 (EDQQSESEEKQRMKE). Residues 684–695 (SAKHNKHHHHHH) are compositionally biased toward basic residues. The span at 742 to 758 (SSTESATTTTNGNGNSK) shows a compositional bias: low complexity. A compositionally biased stretch (polar residues) spans 762–780 (EQLSSLESKTDGATPQDPD).

It belongs to the metallo-beta-lactamase superfamily. RNA-metabolizing metallo-beta-lactamase-like family. CPSF2/YSH1 subfamily.

The protein localises to the nucleus. Component of the cleavage factor I (CF I) involved in pre-mRNA 3'-end processing. The polypeptide is Endoribonuclease ysh1 (ysh1) (Emericella nidulans (strain FGSC A4 / ATCC 38163 / CBS 112.46 / NRRL 194 / M139) (Aspergillus nidulans)).